The following is a 1818-amino-acid chain: Integrin beta-4 (1818 aa).

A signal peptide spans M1–A28. The Extracellular segment spans residues N29–S712. Residues R30 to R74 form the PSI domain. 8 disulfides stabilise this stretch: C31-C49, C39-C457, C42-C62, C52-C73, C246-C289, C459-C478, C470-C481, and C483-C492. Residues D132–T310 form the VWFA domain. Positions 140 and 142 each coordinate Mg(2+). S142, D145, D146, and D177 together coordinate Ca(2+). The segment at W195–P200 is involved in NRG1- and IGF1-binding. Residues N229, D231, P233, and E234 each coordinate Ca(2+). Mg(2+) is bound at residue E234. N-linked (GlcNAc...) asparagine glycosylation is present at N328. Ca(2+) is bound at residue E351. 4 consecutive I-EGF domains span residues C459–N493, C494–E539, Y540–D576, and C577–E617. Positions R473 to D475 match the Cell attachment site motif. N493 carries N-linked (GlcNAc...) asparagine glycosylation. Intrachain disulfides connect C494–C522, C505–C520, C514–C525, C527–C538, C545–C559, C553–C564, C566–C575, C577–C600, C584–C598, C592–C603, and C605–C616. N-linked (GlcNAc...) asparagine glycosylation is present at N581. A glycan (N-linked (GlcNAc...) asparagine) is linked at N619. 4 disulfides stabilise this stretch: C628-C673, C634-C653, C637-C650, and C682-C708. The N-linked (GlcNAc...) asparagine glycan is linked to N697. Residues F713–L733 form a helical membrane-spanning segment. A palmitoylated on several cysteines region spans residues C734–C751. Topologically, residues C734 to T1818 are cytoplasmic. Residue S773 is modified to Phosphoserine. One can recognise a Calx-beta domain in the interval V981 to S1086. The short motif at R1005–D1007 is the Cell attachment site element. Residues S1071 and S1121 each carry the phosphoserine modification. The disordered stretch occupies residues I1115–A1137. Fibronectin type-III domains are found at residues A1131–E1220 and E1224–K1323. A disordered region spans residues L1402 to R1433. The span at V1415–W1426 shows a compositional bias: gly residues. Phosphoserine is present on residues S1451, S1454, and S1470. Phosphothreonine is present on T1483. The residue at position 1490 (S1490) is a Phosphoserine. Position 1526 is a phosphothreonine (T1526). Fibronectin type-III domains lie at T1526–Q1621 and A1639–G1735. The residue at position 1787 (S1787) is a Phosphoserine.

It belongs to the integrin beta chain family. In terms of assembly, heterodimer of an alpha and a beta subunit. Beta-4 associates with alpha-6. Interacts (via cytoplasmic region) with COL17A1 (via cytoplasmic region). Interacts (via cytoplasmic region) with DST isoform 3 (via N-terminus). Interacts (via cytoplasmic domain) with DST (via N-terminus). Interacts with RAC1. ITGA6:ITGB4 is found in a ternary complex with NRG1 and ERBB3. ITGA6:ITGB4 is found in a ternary complex with IGF1 and IGF1R. ITGA6:ITGB4 interacts with IGF2. Interacts with TMEM268; this interaction prevents ITGB4 degradation. In terms of processing, palmitoylated by DHHC3 at several cysteines of the membrane-proximal region, enhancing stability and cell surface expression. Palmitoylation also promotes secondary association with tertaspanins.

Its subcellular location is the cell membrane. It localises to the cell junction. It is found in the hemidesmosome. In terms of biological role, integrin alpha-6/beta-4 is a receptor for laminin. It plays a critical structural role in the hemidesmosome of epithelial cells. Is required for the regulation of keratinocyte polarity and motility. ITGA6:ITGB4 binds to NRG1 (via EGF domain) and this binding is essential for NRG1-ERBB signaling. ITGA6:ITGB4 binds to IGF1 and this binding is essential for IGF1 signaling. ITGA6:ITGB4 binds to IGF2 and this binding is essential for IGF2 signaling. The protein is Integrin beta-4 (Itgb4) of Mus musculus (Mouse).